The sequence spans 269 residues: 3-deoxy-manno-octulosonate cytidylyltransferase (269 aa).

The protein belongs to the KdsB family.

It localises to the cytoplasm. It carries out the reaction 3-deoxy-alpha-D-manno-oct-2-ulosonate + CTP = CMP-3-deoxy-beta-D-manno-octulosonate + diphosphate. It participates in nucleotide-sugar biosynthesis; CMP-3-deoxy-D-manno-octulosonate biosynthesis; CMP-3-deoxy-D-manno-octulosonate from 3-deoxy-D-manno-octulosonate and CTP: step 1/1. Its pathway is bacterial outer membrane biogenesis; lipopolysaccharide biosynthesis. In terms of biological role, activates KDO (a required 8-carbon sugar) for incorporation into bacterial lipopolysaccharide in Gram-negative bacteria. The chain is 3-deoxy-manno-octulosonate cytidylyltransferase from Cupriavidus taiwanensis (strain DSM 17343 / BCRC 17206 / CCUG 44338 / CIP 107171 / LMG 19424 / R1) (Ralstonia taiwanensis (strain LMG 19424)).